Reading from the N-terminus, the 293-residue chain is uncharacterized protein (293 aa).

The protein to M.jannaschii MJ1614 and MJ0008.

This is an uncharacterized protein from Methanocaldococcus jannaschii (strain ATCC 43067 / DSM 2661 / JAL-1 / JCM 10045 / NBRC 100440) (Methanococcus jannaschii).